The following is a 356-amino-acid chain: Probable protein phosphatase 2C T23F11.1 (356 aa).

Residues 23 to 286 (LVGSSCMQGW…DNMTVVLVGL (264 aa)) enclose the PPM-type phosphatase domain. The Mn(2+) site is built by Asp59, Gly60, Asp228, and Asp277. Residues 336 to 356 (NAANQEEEEDDNEPAPANFQV) are disordered.

The protein belongs to the PP2C family. Mg(2+) serves as cofactor. Requires Mn(2+) as cofactor.

The enzyme catalyses O-phospho-L-seryl-[protein] + H2O = L-seryl-[protein] + phosphate. It carries out the reaction O-phospho-L-threonyl-[protein] + H2O = L-threonyl-[protein] + phosphate. This Caenorhabditis elegans protein is Probable protein phosphatase 2C T23F11.1 (ppm-2).